Consider the following 167-residue polypeptide: Biogenesis of lysosome-related organelles complex 1 subunit 6 (167 aa).

Positions 1–11 (MLKSSNINSVL) are enriched in polar residues. Residues 1-38 (MLKSSNINSVLNELPNDPARDSTAQSSHNGKPKQDAET) are disordered. Residues 102-160 (ARLNDMMSDVKRYKDKLTKIKKEMQGVYQRTKELKKRAANVAACKQRDYQRKLERLQHE) are a coiled coil.

The protein belongs to the BLOC1S6 family. In terms of assembly, component of the biogenesis of lysosome-related organelles complex-1 (BLOC-1) composed of Blos1, Blos2, Blos3, Blos4, Dysb, Muted, Pldn and Snapin. Interacts with Blos1, Blos4 and Dysb.

It localises to the synapse. Its subcellular location is the cytoplasm. The protein resides in the cytoskeleton. It is found in the myofibril. The protein localises to the sarcomere. It localises to the z line. Functionally, component of the biogenesis of lysosome-related organelles complex-1 (BLOC-1) involved in pigment granule biogenesis and membrane trafficking in synapses. In response to high synaptic activity at neuromuscular junctions, plays a key role in promoting efficient synaptic vesicle recycling and re-formation through early endosomes. This is Biogenesis of lysosome-related organelles complex 1 subunit 6 from Drosophila melanogaster (Fruit fly).